Here is a 241-residue protein sequence, read N- to C-terminus: Uridylate kinase (241 aa).

An ATP-binding site is contributed by lysine 14–glycine 17. Glycine 56 serves as a coordination point for UMP. Positions 57 and 61 each coordinate ATP. UMP-binding positions include aspartate 77 and threonine 138 to threonine 145. The ATP site is built by threonine 165, tyrosine 171, and aspartate 174.

The protein belongs to the UMP kinase family. As to quaternary structure, homohexamer.

The protein localises to the cytoplasm. The enzyme catalyses UMP + ATP = UDP + ADP. It participates in pyrimidine metabolism; CTP biosynthesis via de novo pathway; UDP from UMP (UMPK route): step 1/1. Inhibited by UTP. In terms of biological role, catalyzes the reversible phosphorylation of UMP to UDP. This Psychrobacter cryohalolentis (strain ATCC BAA-1226 / DSM 17306 / VKM B-2378 / K5) protein is Uridylate kinase.